The chain runs to 226 residues: Urease accessory protein UreF (226 aa).

This sequence belongs to the UreF family. In terms of assembly, ureD, UreF and UreG form a complex that acts as a GTP-hydrolysis-dependent molecular chaperone, activating the urease apoprotein by helping to assemble the nickel containing metallocenter of UreC. The UreE protein probably delivers the nickel.

The protein resides in the cytoplasm. Functionally, required for maturation of urease via the functional incorporation of the urease nickel metallocenter. The polypeptide is Urease accessory protein UreF (Burkholderia ambifaria (strain MC40-6)).